A 238-amino-acid polypeptide reads, in one-letter code: MTDQNETQDTNPVTTRRGVRSFVLRQGRMTEGQKKAFDRNWAKYGLSRDNGMIDPREVFGRDNMLNLEIGFGMGKSLADMAEAAPEQDFIGVEVHLPGVGALLKEVESRGLENVRVYSIDANDVIDLCLPDACLDRVMVFFPDPWHKKKHHKRRLIQPEFVQRIRHKLRVGGILHLATDWENYAEHMLEVMSASEGFANTQEQGGYSPKPDDRPITKFEKRGESLGHGVWDLLFYRTN.

S-adenosyl-L-methionine contacts are provided by E68, E93, D120, and D143. D143 is a catalytic residue. Residues K147, D179, and 216–219 (TKFE) contribute to the substrate site.

This sequence belongs to the class I-like SAM-binding methyltransferase superfamily. TrmB family.

The enzyme catalyses guanosine(46) in tRNA + S-adenosyl-L-methionine = N(7)-methylguanosine(46) in tRNA + S-adenosyl-L-homocysteine. The protein operates within tRNA modification; N(7)-methylguanine-tRNA biosynthesis. Its function is as follows. Catalyzes the formation of N(7)-methylguanine at position 46 (m7G46) in tRNA. This Marinobacter nauticus (strain ATCC 700491 / DSM 11845 / VT8) (Marinobacter aquaeolei) protein is tRNA (guanine-N(7)-)-methyltransferase.